Consider the following 435-residue polypeptide: Serine--tRNA ligase (435 aa).

242–244 (TAE) contacts L-serine. 273–275 (RSE) is an ATP binding site. L-serine is bound at residue Glu-296. 360 to 363 (EISS) serves as a coordination point for ATP. Residue Ser-396 participates in L-serine binding.

It belongs to the class-II aminoacyl-tRNA synthetase family. Type-1 seryl-tRNA synthetase subfamily. In terms of assembly, homodimer. The tRNA molecule binds across the dimer.

It is found in the cytoplasm. The enzyme catalyses tRNA(Ser) + L-serine + ATP = L-seryl-tRNA(Ser) + AMP + diphosphate + H(+). The catalysed reaction is tRNA(Sec) + L-serine + ATP = L-seryl-tRNA(Sec) + AMP + diphosphate + H(+). The protein operates within aminoacyl-tRNA biosynthesis; selenocysteinyl-tRNA(Sec) biosynthesis; L-seryl-tRNA(Sec) from L-serine and tRNA(Sec): step 1/1. Its function is as follows. Catalyzes the attachment of serine to tRNA(Ser). Is also able to aminoacylate tRNA(Sec) with serine, to form the misacylated tRNA L-seryl-tRNA(Sec), which will be further converted into selenocysteinyl-tRNA(Sec). This chain is Serine--tRNA ligase, found in Vibrio campbellii (strain ATCC BAA-1116).